The chain runs to 414 residues: Serine/threonine transporter SstT (414 aa).

Residues 2-15 (TTQRSPGLFRRLAH) lie on the Cytoplasmic side of the membrane. Residues 16–36 (GSLVKQILVGLVLGILLAWIS) traverse the membrane as a helical segment. At 37–45 (KPAAEAVGL) the chain is on the periplasmic side. Residues 46 to 66 (LGTLFVGALKAVAPILVLMLV) form a helical membrane-spanning segment. Residues 67–83 (MASIANHQHGQKTNIRP) are Cytoplasmic-facing. The helical transmembrane segment at 84–104 (ILFLYLLGTFSAALAAVVFSF) threads the bilayer. The Periplasmic segment spans residues 105–142 (AFPSTLHLSSSAGDISPPSGIVEVMRGLVMSMVSNPID). The helical transmembrane segment at 143–163 (ALLKGNYIGILVWAIGLGFAL) threads the bilayer. The Cytoplasmic segment spans residues 164-179 (RHGNETTKNLVNDLSN). The helical transmembrane segment at 180–200 (AVTFMVKLVIRFAPIGIFGLV) threads the bilayer. Residues 201-217 (SSTLATTGFSTLWGYAQ) lie on the Periplasmic side of the membrane. The helical transmembrane segment at 218-238 (LLVVLVGCMLLVALVVNPLLV) threads the bilayer. Residues 239-299 (WWKIRRNPFP…VSIPLGATIN (61 aa)) lie on the Cytoplasmic side of the membrane. The chain crosses the membrane as a helical span at residues 300 to 320 (MAGAAITITVLTLAAVNTLGI). Residues 321 to 331 (PVDLPTALLLS) lie on the Periplasmic side of the membrane. Residues 332–352 (VVASLCACGASGVAGGSLLLI) form a helical membrane-spanning segment. The Cytoplasmic segment spans residues 353 to 414 (PLACNMFGIS…DRLANSALRN (62 aa)).

It belongs to the dicarboxylate/amino acid:cation symporter (DAACS) (TC 2.A.23) family.

It localises to the cell inner membrane. It catalyses the reaction L-serine(in) + Na(+)(in) = L-serine(out) + Na(+)(out). The enzyme catalyses L-threonine(in) + Na(+)(in) = L-threonine(out) + Na(+)(out). Involved in the import of serine and threonine into the cell, with the concomitant import of sodium (symport system). The sequence is that of Serine/threonine transporter SstT from Shigella boydii serotype 4 (strain Sb227).